Here is a 3034-residue protein sequence, read N- to C-terminus: Cadherin EGF LAG seven-pass G-type receptor 1 (3034 aa).

Positions 1 to 29 (MAPSSPRVLPALVLLAAAALPALELGAAA) are cleaved as a signal peptide. Over 30–2484 (WELRVPGGAR…REHGEVLPLK (2455 aa)) the chain is Extracellular. Residues 222-243 (GTPSESPSVSPSLLNLSQPRAG) are compositionally biased toward low complexity. Residues 222–267 (GTPSESPSVSPSLLNLSQPRAGVVRRSRRGTGSSTSPQFPLPSYQV) are disordered. Asn236 carries an N-linked (GlcNAc...) asparagine glycan. Cadherin domains follow at residues 261–368 (PLPS…SPVF), 369–474 (EQSE…YPQF), 475–580 (SEKR…APIF), 581–702 (VSSP…DPMF), 703–804 (TQPV…RPVF), 805–907 (QSSH…APRF), 908–1014 (LRDF…PPVF), 1015–1116 (EKDE…PPEL), and 1121–1239 (ILFN…SPLL). Asn561, Asn649, and Asn793 each carry an N-linked (GlcNAc...) asparagine glycan. N-linked (GlcNAc...) asparagine glycosylation is found at Asn1129, Asn1154, Asn1228, Asn1264, Asn1274, and Asn1302. An EGF-like 1; calcium-binding domain is found at 1318 to 1376 (DDNICLREPCENYMKCVSVLRFDSSAPFISSTTVLFRPIHPITGLRCRCPPGFTGDYCE). 9 cysteine pairs are disulfide-bonded: Cys1322/Cys1333, Cys1327/Cys1364, Cys1366/Cys1375, Cys1382/Cys1393, Cys1387/Cys1402, Cys1404/Cys1413, Cys1422/Cys1433, Cys1427/Cys1443, and Cys1445/Cys1455. One can recognise an EGF-like 2; calcium-binding domain in the interval 1378–1414 (EIDLCYSNPCGANGRCRSREGGYTCECFEDFTGEHCQ). The EGF-like 3; calcium-binding domain maps to 1418 to 1456 (RSGRCASGVCKNGGTCVNLLIGGFHCVCPPGEYEHPYCE). Positions 1457-1661 (VSTRSFPPQS…IANNGTRAGC (205 aa)) constitute a Laminin G-like 1 domain. 3 N-linked (GlcNAc...) asparagine glycosylation sites follow: Asn1591, Asn1638, and Asn1655. 13 disulfides stabilise this stretch: Cys1635/Cys1661, Cys1668/Cys1679, Cys1673/Cys1688, Cys1690/Cys1699, Cys1855/Cys1885, Cys1891/Cys1902, Cys1896/Cys1911, Cys1913/Cys1922, Cys1926/Cys1937, Cys1931/Cys1949, Cys1951/Cys1960, Cys1968/Cys1981, and Cys1983/Cys1993. Residues 1664 to 1700 (QRNFCDGTSCQNGGTCVNRWNTYLCECPLRFGGKNCE) enclose the EGF-like 4; calcium-binding domain. Asn1681 carries the post-translational modification (3R)-3-hydroxyasparagine. The Laminin G-like 2 domain maps to 1704–1885 (PHPQRFTGES…ALKVRVKDGC (182 aa)). The EGF-like 5; calcium-binding domain maps to 1887-1922 (VEDPCASSPCPPHSHCRDTWDSYSCICDRGYFGKKC). At Asp1904 the chain carries (3R)-3-hydroxyaspartate. The 39-residue stretch at 1923-1961 (VDACLLNPCKHVAACVRSPNTPRGYSCECGPGHYGQYCE) folds into the EGF-like 6; calcium-binding domain. The EGF-like 7; calcium-binding domain occupies 1962–1994 (NKVDLPCPKGWWGNPVCGPCHCAVSQGFDPDCN). A glycan (N-linked (GlcNAc...) asparagine) is linked at Asn1994. The 36-residue stretch at 1996–2031 (TNGQCQCKENYYKPPAQDACLPCDCFPHGSHSRACD) folds into the EGF-like 8; calcium-binding domain. Disulfide bonds link Cys2000-Cys2015, Cys2002-Cys2018, Cys2020-Cys2030, Cys2039-Cys2048, and Cys2051-Cys2063. In terms of domain architecture, Laminin EGF-like spans 2018 to 2065 (CDCFPHGSHSRACDMDTGQCACKPGVIGRQCNRCDNPFAEVTSLGCEV). N-linked (GlcNAc...) asparagine glycans are attached at residues Asn2118, Asn2137, Asn2144, Asn2155, Asn2160, and Asn2272. The tract at residues 2295-2346 (SVSFPADTFKPPEKKEGPVVRLTNRRTTPLTAQPEPRAERETSSSRRRRHPD) is disordered. The GAIN-B domain maps to 2312-2476 (PVVRLTNRRT…AVLMDISRRE (165 aa)). 2 disulfides stabilise this stretch: Cys2426-Cys2458 and Cys2446-Cys2460. Residues 2426 to 2476 (CVFWNHSLDTGGTGGWSAKGCELLSRNRTHVTCQCSHSASCAVLMDISRRE) are GPS. N-linked (GlcNAc...) asparagine glycosylation is found at Asn2430 and Asn2452. A helical membrane pass occupies residues 2485 to 2505 (IITYAALSLSLVALLVAFVLL). Residues 2506-2516 (SLVRTLRSNLH) are Cytoplasmic-facing. The chain crosses the membrane as a helical span at residues 2517-2537 (SIHKNLITALFFSQLIFMVGI). Asn2538 carries an N-linked (GlcNAc...) asparagine glycan. The Extracellular portion of the chain corresponds to 2538–2542 (NQTEN). The helical transmembrane segment at 2543 to 2563 (PFLCTVVAILLHYVSMGTFAW) threads the bilayer. Over 2564–2587 (TLVENLHVYRMLTEVRNIDTGPMR) the chain is Cytoplasmic. Residues 2588–2608 (FYHVVGWGIPAIVTGLAVGLD) traverse the membrane as a helical segment. The Extracellular portion of the chain corresponds to 2609-2625 (PQGYGNPDFCWLSLQDT). A helical membrane pass occupies residues 2626–2646 (LIWSFAGPVGTVIIINTVIFV). Topologically, residues 2647-2670 (LSAKVSCQRKHHYYERKGVVSMLR) are cytoplasmic. A helical transmembrane segment spans residues 2671 to 2691 (TAFLLLLLVTATWLLGLLAVN). At 2692 to 2694 (SDT) the chain is on the extracellular side. The chain crosses the membrane as a helical span at residues 2695–2715 (LSFHYLFAAFSCLQGIFVLLF). Residues 2716–3034 (HCVAHREVRK…QANGSDSEKP (319 aa)) are Cytoplasmic-facing. Residues 2774-3034 (TASLDSTTRD…QANGSDSEKP (261 aa)) form a disordered region. Phosphoserine is present on residues Ser2776, Ser2779, Ser2886, and Ser2888. The segment covering 2893–2909 (TEPHLKVETKVSVELHR) has biased composition (basic and acidic residues). Over residues 2976–2986 (SPTSSRTSSLG) the composition is skewed to low complexity. The segment covering 3003–3012 (PRREPGREHL) has biased composition (basic and acidic residues). The segment covering 3020 to 3034 (RTGSAQANGSDSEKP) has biased composition (polar residues).

It belongs to the G-protein coupled receptor 2 family. LN-TM7 subfamily. The iron and 2-oxoglutarate dependent 3-hydroxylation of aspartate and asparagine is (R) stereospecific within EGF domains. Expressed in the brain, where it is localized principally in the ependymal cell layer, choroid plexus and the area postrema. Also found in spinal cord and in the eye.

Its subcellular location is the cell membrane. Receptor that may have an important role in cell/cell signaling during nervous system formation. In Mus musculus (Mouse), this protein is Cadherin EGF LAG seven-pass G-type receptor 1 (Celsr1).